Here is an 83-residue protein sequence, read N- to C-terminus: RNA-binding protein Hfq (83 aa).

The Sm domain occupies 9 to 68 (DPYLNALRKERIPVSIFLVNGIKLQGQIESFDQFVILLKNTVSQMVYKHAISTVVPARNV).

The protein belongs to the Hfq family. Homohexamer.

Its function is as follows. RNA chaperone that binds small regulatory RNA (sRNAs) and mRNAs to facilitate mRNA translational regulation in response to envelope stress, environmental stress and changes in metabolite concentrations. Also binds with high specificity to tRNAs. In Hahella chejuensis (strain KCTC 2396), this protein is RNA-binding protein Hfq.